A 150-amino-acid chain; its full sequence is Large ribosomal subunit protein bL9 (150 aa).

This sequence belongs to the bacterial ribosomal protein bL9 family.

In terms of biological role, binds to the 23S rRNA. The sequence is that of Large ribosomal subunit protein bL9 from Limosilactobacillus reuteri (strain DSM 20016) (Lactobacillus reuteri).